A 51-amino-acid chain; its full sequence is Large ribosomal subunit protein eL39 (51 aa).

Belongs to the eukaryotic ribosomal protein eL39 family. As to quaternary structure, component of the large ribosomal subunit. Interacts with IMPACT.

Its subcellular location is the cytoplasm. Functionally, RNA-binding component of the large ribosomal subunit. The ribosome is a large ribonucleoprotein complex responsible for the synthesis of proteins in the cell. In Mus musculus (Mouse), this protein is Large ribosomal subunit protein eL39 (Rpl39).